The primary structure comprises 415 residues: T-cell-specific guanine nucleotide triphosphate-binding protein 1 (415 aa).

Residues 55–237 (APLHIAVTGE…PKLETKLLQD (183 aa)) form the IRG-type G domain. The GDP site is built by Gly66, Gly68, Lys69, and Ser70. A (Microbial infection) Phosphothreonine; by ROP17 modification is found at Thr89. Positions 90, 171, 173, and 219 each coordinate GDP.

It belongs to the TRAFAC class dynamin-like GTPase superfamily. IRG family. In terms of assembly, monomer, homodimer or homotetramer in the presence of GTP. Forms higher order homooligomers in GTP-dependent manner. As to quaternary structure, (Microbial infection) Interacts with Toxoplasma gondii ROP18. In terms of processing, (Microbial infection) Phosphorylated by Toxoplasma gondii ROP17; the phosphorylation leads to disassembly of IRGB6 (TGTP1/TGTP2) polymers into monomers and dimers. Phosphorylated by Toxoplasma gondii ROP18. In terms of tissue distribution, expressed in thymus and lymph nodes, predominantly T-cells. Not expressed by immature CD4(+) CD8(+) thymocytes (at protein level). Expressed in IFNG-stimulated macrophages. Expressed at low levels in unstimulated astrocytes. Due to sequence similarity with Tgtp2, it is impossible to assign unambiguously experimental data published in the literature to Tgtp1 or Tgtp2 gene.

The protein resides in the cytoplasm. It localises to the endoplasmic reticulum. It is found in the golgi apparatus. Its subcellular location is the parasitophorous vacuole membrane. The enzyme catalyses GTP + H2O = GDP + phosphate + H(+). In terms of biological role, involved in innate cell-autonomous resistance to intracellular pathogens, such as Toxoplasma gondii. During avirulent type II T.gondii infection, recruited to the parasitophorous vacuole (PV) membrane, leading to PV vesiculation and rupture, and subsequent digestion of the parasite within the cytosol. Not recruited to virulent type I T.gondii PV membrane. May confer an antiviral state for vesicular stomatitis virus. The polypeptide is T-cell-specific guanine nucleotide triphosphate-binding protein 1 (Tgtp1) (Mus musculus (Mouse)).